Consider the following 71-residue polypeptide: Large ribosomal subunit protein bL31 (71 aa).

It belongs to the bacterial ribosomal protein bL31 family. Type A subfamily. Part of the 50S ribosomal subunit.

Its function is as follows. Binds the 23S rRNA. The sequence is that of Large ribosomal subunit protein bL31 from Metamycoplasma arthritidis (strain 158L3-1) (Mycoplasma arthritidis).